A 171-amino-acid chain; its full sequence is Shikimate kinase (171 aa).

Ala-11–Thr-16 lines the ATP pocket. Thr-15 lines the Mg(2+) pocket. Residues Asp-33, Arg-57, and Gly-79 each contribute to the substrate site. ATP is bound at residue Arg-117. Position 136 (Arg-136) interacts with substrate.

The protein belongs to the shikimate kinase family. In terms of assembly, monomer. It depends on Mg(2+) as a cofactor.

Its subcellular location is the cytoplasm. It catalyses the reaction shikimate + ATP = 3-phosphoshikimate + ADP + H(+). Its pathway is metabolic intermediate biosynthesis; chorismate biosynthesis; chorismate from D-erythrose 4-phosphate and phosphoenolpyruvate: step 5/7. Functionally, catalyzes the specific phosphorylation of the 3-hydroxyl group of shikimic acid using ATP as a cosubstrate. The chain is Shikimate kinase from Thermoanaerobacter pseudethanolicus (strain ATCC 33223 / 39E) (Clostridium thermohydrosulfuricum).